The following is a 125-amino-acid chain: Holo-[acyl-carrier-protein] synthase (125 aa).

Residues aspartate 8 and glutamate 57 each contribute to the Mg(2+) site.

The protein belongs to the P-Pant transferase superfamily. AcpS family. It depends on Mg(2+) as a cofactor.

The protein resides in the cytoplasm. It carries out the reaction apo-[ACP] + CoA = holo-[ACP] + adenosine 3',5'-bisphosphate + H(+). Functionally, transfers the 4'-phosphopantetheine moiety from coenzyme A to a Ser of acyl-carrier-protein. In Nitrosospira multiformis (strain ATCC 25196 / NCIMB 11849 / C 71), this protein is Holo-[acyl-carrier-protein] synthase.